The chain runs to 432 residues: MAKNVVVLGTQWGDEGKGKVVDLLTDKATYVVRYQGGHNAGHTLVIDGEKTVLHLIPSGILRENVTCVIGNGVVLSPEALLKESAMLEERGVPVKERLRISEACPLILPFHVELDLAREKARGDKPIGTTGRGIGPAYEDKVSRRGLRVGDLFNPTDFAVKLKEVLEYHNFMLTNYYKVEPVSYEKTLADALAVADILKAMVVDVTDVLDRARKRGDEIMFEGAQGTLLDIDHGTYPYVTSSNTTVGGVATGAGFGPLHLDYVLGIVKAYTTRVGSGPFPTELGCDVGQHLGIKGHEFGATTGRKRRTGWFDAVAMKRAVQINSITGFCLTKLDVLDGLETLSICTGYKHADGTVKDVPPMAADDYELITPVYEEMPGWSENSFGVTEYDNLPQAAKNYIKRLEELTGVPIDIISTGPDRNETIVLRHPFEV.

GTP-binding positions include 13 to 19 (GDEGKGK) and 41 to 43 (GHT). The active-site Proton acceptor is the D14. The Mg(2+) site is built by D14 and G41. IMP is bound by residues 14–17 (DEGK), 39–42 (NAGH), T130, R144, Q225, T240, and R304. Residue H42 is the Proton donor of the active site. 300–306 (ATTGRKR) serves as a coordination point for substrate. GTP-binding positions include R306, 332-334 (KLD), and 415-417 (STG).

The protein belongs to the adenylosuccinate synthetase family. In terms of assembly, homodimer. Mg(2+) serves as cofactor.

The protein localises to the cytoplasm. The enzyme catalyses IMP + L-aspartate + GTP = N(6)-(1,2-dicarboxyethyl)-AMP + GDP + phosphate + 2 H(+). Its pathway is purine metabolism; AMP biosynthesis via de novo pathway; AMP from IMP: step 1/2. Its function is as follows. Plays an important role in the de novo pathway of purine nucleotide biosynthesis. Catalyzes the first committed step in the biosynthesis of AMP from IMP. The sequence is that of Adenylosuccinate synthetase from Pseudoalteromonas atlantica (strain T6c / ATCC BAA-1087).